A 236-amino-acid chain; its full sequence is Ubiquinone biosynthesis O-methyltransferase (236 aa).

S-adenosyl-L-methionine contacts are provided by Arg36, Gly56, Asp77, and Met125.

The protein belongs to the methyltransferase superfamily. UbiG/COQ3 family.

The catalysed reaction is a 3-demethylubiquinol + S-adenosyl-L-methionine = a ubiquinol + S-adenosyl-L-homocysteine + H(+). The enzyme catalyses a 3-(all-trans-polyprenyl)benzene-1,2-diol + S-adenosyl-L-methionine = a 2-methoxy-6-(all-trans-polyprenyl)phenol + S-adenosyl-L-homocysteine + H(+). The protein operates within cofactor biosynthesis; ubiquinone biosynthesis. In terms of biological role, O-methyltransferase that catalyzes the 2 O-methylation steps in the ubiquinone biosynthetic pathway. This is Ubiquinone biosynthesis O-methyltransferase from Glaesserella parasuis serovar 5 (strain SH0165) (Haemophilus parasuis).